Consider the following 628-residue polypeptide: Protein ETHYLENE INSENSITIVE 3 (628 aa).

Residues 38–68 are a coiled coil; it reads EDDYTDDEIDVDELERRMWRDKMRLKRLKEQ. Residues 66–79 are compositionally biased toward basic and acidic residues; sequence KEQDKGKEGVDAAK. Positions 66-92 are disordered; that stretch reads KEQDKGKEGVDAAKQRQSQEQARRKKM. The tract at residues 174-306 is DNA-binding domain; it reads TPHTLQELQD…SLARELYPES (133 aa).

It belongs to the EIN3 family. As to quaternary structure, acts as a homodimer to bind the primary ethylene response element. Interacts with TAF12B. Interacts with KIN10. Binds to ENAP1 in the presence of ethylene; this reaction facilitates its association with histone. In terms of processing, phosphorylated by KIN10.

It is found in the nucleus. With respect to regulation, activated by phosphorylation by MPK3 and MPK6. Down-regulated by KIN10 that controls its protein stability under a phosphorylation-dependent manner. Satnilitzed during hypoxia (e.g. submergences) via a ceramides-triggered and CTR1-dependent manner. Functionally, transcription factor acting as a positive regulator in the ethylene response pathway, by promoting histone acetylation in an ENAP1-dependent manner, thus accelerating the expression of ethylene-responsive genes. Binds DNA. Is required for ethylene responsiveness in adult plant tissues. Binds a primary ethylene response element present in the ETHYLENE-RESPONSE-FACTOR1 promoter with consequence to activate the transcription of this gene. The sequence is that of Protein ETHYLENE INSENSITIVE 3 from Arabidopsis thaliana (Mouse-ear cress).